A 115-amino-acid polypeptide reads, in one-letter code: Large ribosomal subunit protein uL18 (115 aa).

Residues 1–29 (MISKPDKNKLRQKRHTRVRGKISGTSETP) form a disordered region. Residues 10–20 (LRQKRHTRVRG) are compositionally biased toward basic residues.

It belongs to the universal ribosomal protein uL18 family. As to quaternary structure, part of the 50S ribosomal subunit; part of the 5S rRNA/L5/L18/L25 subcomplex. Contacts the 5S and 23S rRNAs.

In terms of biological role, this is one of the proteins that bind and probably mediate the attachment of the 5S RNA into the large ribosomal subunit, where it forms part of the central protuberance. This chain is Large ribosomal subunit protein uL18, found in Lactococcus lactis subsp. lactis (strain IL1403) (Streptococcus lactis).